The sequence spans 298 residues: Cation-efflux pump FieF (298 aa).

A helical membrane pass occupies residues 24 to 44 (LLIKIFAWWYTGSVSILAALV). Positions 45 and 49 each coordinate Zn(2+). The next 2 membrane-spanning stretches (helical) occupy residues 80-100 (SLAA…LTSI) and 112-132 (PGVG…LVTF). The Zn(2+) site is built by histidine 151 and aspartate 155. A run of 2 helical transmembrane segments spans residues 154–174 (SDVM…YGWH) and 176–196 (ADAL…LRMG).

It belongs to the cation diffusion facilitator (CDF) transporter (TC 2.A.4) family. FieF subfamily. In terms of assembly, homodimer.

Its subcellular location is the cell inner membrane. It carries out the reaction Zn(2+)(in) + H(+)(out) = Zn(2+)(out) + H(+)(in). The enzyme catalyses Cd(2+)(in) + H(+)(out) = Cd(2+)(out) + H(+)(in). It catalyses the reaction Fe(2+)(in) + H(+)(out) = Fe(2+)(out) + H(+)(in). Functionally, divalent metal cation transporter which exports Zn(2+), Cd(2+) and possibly Fe(2+). May be involved in zinc and iron detoxification by efflux. The polypeptide is Cation-efflux pump FieF (Salmonella typhi).